Reading from the N-terminus, the 394-residue chain is MNKKSIRDVDLKGKRVFCRVDFNVPMKEGKITDETRIRAALPTIQYLVEQGAKVILASHLGRPKGQVVEEMRLTPVAARLGELLGKDVKKADEAFGPAVQEMVAAMNEGDVLVLENVRFYAGEEKNDAELAKEFAALADIFVNDAFGAAHRAHASTAGIADYLPAVSGLLMEKELEVLGKALSNPERPFTAIIGGAKVKDKIGVIRHLLDKVDNLIIGGGLAYTFVKALGHEIGLSLCEDDKIELAKEFMQLAKEKGVNFYMPVDVVITEEFSETATTKIVGIDSIPSNWEGVDIGPKTREIYADVIKNSKLVVWNGPMGVFEMTPFAEGTKAVGQALADAEGTYSVIGGGDSAAAVEKFGMADKMSHISTGGGASLEFMEGKELPGVVCLNDK.

Substrate-binding positions include 21-23 (DFN), Arg-36, 59-62 (HLGR), Arg-118, and Arg-151. Residue Ser-183 is modified to Phosphoserine. Positions 201 and 292 each coordinate ATP. Thr-299 is modified (phosphothreonine). Residues Glu-323 and 350–353 (GGDS) each bind ATP.

This sequence belongs to the phosphoglycerate kinase family. Monomer.

The protein resides in the cytoplasm. The enzyme catalyses (2R)-3-phosphoglycerate + ATP = (2R)-3-phospho-glyceroyl phosphate + ADP. The protein operates within carbohydrate degradation; glycolysis; pyruvate from D-glyceraldehyde 3-phosphate: step 2/5. In Bacillus cereus (strain ZK / E33L), this protein is Phosphoglycerate kinase.